Consider the following 151-residue polypeptide: UPF0756 membrane protein HS_0993 (151 aa).

4 helical membrane passes run 1–21 (MSLQ…LGVL), 52–72 (YGVN…IVSG), 81–101 (ALIH…AWFG), and 123–143 (ILGV…AGIL).

This sequence belongs to the UPF0756 family.

It localises to the cell membrane. The sequence is that of UPF0756 membrane protein HS_0993 from Histophilus somni (strain 129Pt) (Haemophilus somnus).